The following is a 392-amino-acid chain: Cell division protein FtsZ (392 aa).

GTP is bound by residues 24-28, 111-113, Glu142, Arg145, and Asp189; these read GGGCN and GTG.

This sequence belongs to the FtsZ family. Homodimer. Polymerizes to form a dynamic ring structure in a strictly GTP-dependent manner. Interacts directly with several other division proteins.

The protein resides in the cytoplasm. In terms of biological role, essential cell division protein that forms a contractile ring structure (Z ring) at the future cell division site. The regulation of the ring assembly controls the timing and the location of cell division. One of the functions of the FtsZ ring is to recruit other cell division proteins to the septum to produce a new cell wall between the dividing cells. Binds GTP and shows GTPase activity. The polypeptide is Cell division protein FtsZ (Neisseria meningitidis serogroup A / serotype 4A (strain DSM 15465 / Z2491)).